Here is a 250-residue protein sequence, read N- to C-terminus: Kv channel-interacting protein 4 (250 aa).

Positions 2–44 are KIS; the sequence is NVRRVESISAQLEEASSTGGFLYAQNSTKRSIKERLMKLLPCS. Phosphoserine is present on residues S17 and S56. The 57-residue stretch at 61 to 117 folds into the EF-hand 1; degenerate domain; it reads LEMATVRHRPEALELLEAQSKFTKKELQILYRGFKNECPSGVVNEETFKEIYSQFFP. 3 consecutive EF-hand domains span residues 120-155, 156-191, and 204-239; these read DSTT…LLRG, TVQE…IYDM, and APRQ…DENI. The Ca(2+) site is built by D133, D135, N137, D144, D169, N171, D173, Y175, E180, D217, N219, D221, and E228. Positions 237–250 are interaction with KCND2; sequence ENIMRSMQLFENVI.

The protein belongs to the recoverin family. In terms of assembly, component of heteromultimeric potassium channels. Identified in potassium channel complexes containing KCND1, KCND2, KCND3, KCNIP1, KCNIP2, KCNIP3, KCNIP4, DPP6 and DPP10. Interacts with KCND2. Interacts with KCND3. Interacts with the C-terminus of PSEN2 and probably PSEN1.

It localises to the cell membrane. The protein localises to the cytoplasm. It is found in the peroxisome. Functionally, regulatory subunit of Kv4/D (Shal)-type voltage-gated rapidly inactivating A-type potassium channels. Modulates KCND2 channel density, inactivation kinetics and rate of recovery from inactivation in a calcium-dependent and isoform-specific manner. Modulates KCND3/Kv4.3 currents. Isoform 4 does not increase KCND2 expression at the cell membrane. Isoform 4 retains KCND3 in the endoplasmic reticulum and negatively regulates its expression at the cell membrane. The polypeptide is Kv channel-interacting protein 4 (KCNIP4) (Macaca fascicularis (Crab-eating macaque)).